Reading from the N-terminus, the 310-residue chain is Transaldolase (310 aa).

Lysine 124 (schiff-base intermediate with substrate) is an active-site residue.

This sequence belongs to the transaldolase family. Type 1 subfamily. In terms of assembly, homodimer.

Its subcellular location is the cytoplasm. It catalyses the reaction D-sedoheptulose 7-phosphate + D-glyceraldehyde 3-phosphate = D-erythrose 4-phosphate + beta-D-fructose 6-phosphate. The protein operates within carbohydrate degradation; pentose phosphate pathway; D-glyceraldehyde 3-phosphate and beta-D-fructose 6-phosphate from D-ribose 5-phosphate and D-xylulose 5-phosphate (non-oxidative stage): step 2/3. Functionally, transaldolase is important for the balance of metabolites in the pentose-phosphate pathway. The sequence is that of Transaldolase from Teredinibacter turnerae (strain ATCC 39867 / T7901).